The chain runs to 146 residues: Endoribonuclease YbeY (146 aa).

Residues H108, H112, and H118 each coordinate Zn(2+).

This sequence belongs to the endoribonuclease YbeY family. It depends on Zn(2+) as a cofactor.

The protein localises to the cytoplasm. Its function is as follows. Single strand-specific metallo-endoribonuclease involved in late-stage 70S ribosome quality control and in maturation of the 3' terminus of the 16S rRNA. In Aster yellows witches'-broom phytoplasma (strain AYWB), this protein is Endoribonuclease YbeY.